The primary structure comprises 196 residues: Small ribosomal subunit protein uS4c (196 aa).

Residues 20–39 (GLTRKTPKSGSNLKKKFHSG) form a disordered region. In terms of domain architecture, S4 RNA-binding spans 89-152 (MRLDNILFRL…RSKCLVQNSI (64 aa)).

Belongs to the universal ribosomal protein uS4 family. As to quaternary structure, part of the 30S ribosomal subunit. Contacts protein S5. The interaction surface between S4 and S5 is involved in control of translational fidelity.

It localises to the plastid. Its subcellular location is the chloroplast. Functionally, one of the primary rRNA binding proteins, it binds directly to 16S rRNA where it nucleates assembly of the body of the 30S subunit. Its function is as follows. With S5 and S12 plays an important role in translational accuracy. This chain is Small ribosomal subunit protein uS4c (rps4), found in Dendrocalamus giganteus (Giant bamboo).